The chain runs to 101 residues: Ubiquitin-related modifier 1 (101 aa).

A 1-thioglycine modification is found at glycine 101. A Glycyl lysine isopeptide (Gly-Lys) (interchain with K-? in acceptor proteins) cross-link involves residue glycine 101.

Belongs to the URM1 family. Post-translationally, C-terminal thiocarboxylation occurs in 2 steps, it is first acyl-adenylated (-COAMP) via the hesA/moeB/thiF part of UBA4, then thiocarboxylated (-COSH) via the rhodanese domain of UBA4.

The protein resides in the cytoplasm. It functions in the pathway tRNA modification; 5-methoxycarbonylmethyl-2-thiouridine-tRNA biosynthesis. Functionally, acts as a sulfur carrier required for 2-thiolation of mcm(5)S(2)U at tRNA wobble positions of cytosolic tRNA(Lys), tRNA(Glu) and tRNA(Gln). Serves as sulfur donor in tRNA 2-thiolation reaction by being thiocarboxylated (-COSH) at its C-terminus by the MOCS3 homolog UBA4. The sulfur is then transferred to tRNA to form 2-thiolation of mcm(5)S(2)U. Prior mcm(5) tRNA modification by the elongator complex is required for 2-thiolation. Also acts as a ubiquitin-like protein (UBL) that is covalently conjugated via an isopeptide bond to lysine residues of target proteins such as AHP1. The thiocarboxylated form serves as substrate for conjugation and oxidative stress specifically induces the formation of UBL-protein conjugates. This Debaryomyces hansenii (strain ATCC 36239 / CBS 767 / BCRC 21394 / JCM 1990 / NBRC 0083 / IGC 2968) (Yeast) protein is Ubiquitin-related modifier 1.